A 396-amino-acid chain; its full sequence is Probable sugar efflux transporter (396 aa).

12 helical membrane-spanning segments follow: residues 15–35 (VVTL…PVGL), 50–70 (VGIM…PFML), 81–101 (LICL…AWNF), 103–123 (VLVI…SITA), 136–156 (AQAL…GLPI), 169–189 (TFFA…KLLP), 209–229 (PALM…YTAY), 246–266 (FATV…LVFG), 275–295 (LLVS…LPAA), 301–321 (LALL…GMQV), 333–353 (VAMA…ALAG), and 364–384 (TIGY…VLIF).

It belongs to the major facilitator superfamily. SotB (TC 2.A.1.2) family.

The protein localises to the cell inner membrane. Functionally, involved in the efflux of sugars. The physiological role may be the reduction of the intracellular concentration of toxic sugars or sugar metabolites. The chain is Probable sugar efflux transporter from Salmonella arizonae (strain ATCC BAA-731 / CDC346-86 / RSK2980).